A 98-amino-acid chain; its full sequence is MQSAESGLLILPPNLMQRRVLKIKRILSYSRDTKVSHKVVLAYFRKHYWLIANGFCPYCHNHYRTFGILANHIMRSHTLEVAEDYFKLREKIKERGRK.

A C2H2-type zinc finger spans residues 54-77 (GFCPYCHNHYRTFGILANHIMRSH).

The sequence is that of Putative zinc finger protein ORF98b from Acidianus convivator (ATV).